Consider the following 366-residue polypeptide: Aminomethyltransferase (366 aa).

Belongs to the GcvT family. As to quaternary structure, the glycine cleavage system is composed of four proteins: P, T, L and H.

The catalysed reaction is N(6)-[(R)-S(8)-aminomethyldihydrolipoyl]-L-lysyl-[protein] + (6S)-5,6,7,8-tetrahydrofolate = N(6)-[(R)-dihydrolipoyl]-L-lysyl-[protein] + (6R)-5,10-methylene-5,6,7,8-tetrahydrofolate + NH4(+). The glycine cleavage system catalyzes the degradation of glycine. This chain is Aminomethyltransferase, found in Bacillus cereus (strain 03BB102).